The chain runs to 490 residues: ATP synthase subunit beta, chloroplastic (490 aa).

169-176 (GGAGVGKT) provides a ligand contact to ATP.

The protein belongs to the ATPase alpha/beta chains family. F-type ATPases have 2 components, CF(1) - the catalytic core - and CF(0) - the membrane proton channel. CF(1) has five subunits: alpha(3), beta(3), gamma(1), delta(1), epsilon(1). CF(0) has four main subunits: a(1), b(1), b'(1) and c(9-12).

The protein resides in the plastid. It localises to the chloroplast thylakoid membrane. The catalysed reaction is ATP + H2O + 4 H(+)(in) = ADP + phosphate + 5 H(+)(out). Produces ATP from ADP in the presence of a proton gradient across the membrane. The catalytic sites are hosted primarily by the beta subunits. The polypeptide is ATP synthase subunit beta, chloroplastic (Cyanidium caldarium (Red alga)).